The sequence spans 30 residues: Photosystem I reaction center subunit XII (30 aa).

Residues 7 to 27 (VFIGLVIALVPAILAFKLGLS) form a helical membrane-spanning segment.

The protein belongs to the PsaM family.

The protein resides in the plastid. It localises to the chloroplast thylakoid membrane. This chain is Photosystem I reaction center subunit XII, found in Cyanidium caldarium (Red alga).